The following is a 561-amino-acid chain: Tudor and KH domain-containing protein (561 aa).

KH domains are found at residues 52 to 115 (DIEI…KAAI) and 124 to 190 (PVSE…KHLI). Residues Lys-65, Lys-76, Lys-110, Lys-112, Lys-152, Lys-175, Lys-181, Lys-187, Lys-193, Lys-256, and Lys-267 each participate in a glycyl lysine isopeptide (Lys-Gly) (interchain with G-Cter in ubiquitin) cross-link. Positions 219–262 (SVRREDMTEPGGAGEPALWKNTSSSMEPTAPLVTPPPKGGGDMA) are disordered. Residue Ser-278 is modified to Phosphoserine. The 60-residue stretch at 353–412 (TVHVGDIVAAPLPTNGSWYRARVLGTLENGNLDLYFVDFGDNGDCPLKDLRALRSDFLSL) folds into the Tudor domain. Residues Lys-479, Lys-510, and Lys-529 each participate in a glycyl lysine isopeptide (Lys-Gly) (interchain with G-Cter in ubiquitin) cross-link.

It belongs to the Tdrkh family. In terms of assembly, interacts with (symmetrically methylated) PIWIL1, PIWIL2 and PIWIL4. Ubiquitinated by PRKN during mitophagy, leading to its degradation and enhancement of mitophagy. Deubiquitinated by USP30.

It is found in the cytoplasm. The protein localises to the mitochondrion. In terms of biological role, participates in the primary piRNA biogenesis pathway and is required during spermatogenesis to repress transposable elements and prevent their mobilization, which is essential for the germline integrity. The piRNA metabolic process mediates the repression of transposable elements during meiosis by forming complexes composed of piRNAs and Piwi proteins and govern the methylation and subsequent repression of transposons. Required for the final steps of primary piRNA biogenesis by participating in the processing of 31-37 nt intermediates into mature piRNAs. May act in pi-bodies and piP-bodies by transferring piRNA precursors or intermediates to or between these granules. The chain is Tudor and KH domain-containing protein (TDRKH) from Homo sapiens (Human).